The sequence spans 347 residues: NADH-ubiquinone oxidoreductase chain 2 (347 aa).

The next 10 helical transmembrane spans lie at 4-21, 26-45, 59-79, 96-116, 122-142, 148-168, 201-221, 242-262, 274-294, and 326-346; these read LILSMIMATIILGTLIVM, WLMVWIGFEMNMLAILPVLM, YFLTQATASMLLMLAITINLI, IIMTLALAMKLGLSPFHFWVP, IQLSSGLILLTWQKLAPMSIL, AINMDLLLSMSLMSVAIGGWG, ALLNLIIYILLTTTTFMTFML, TTILILMLSLGGLPPLSGFLP, DSIITPTIMAITALLNLYFYM, and LPPLIVLSTLILPMSPMLMLL.

Belongs to the complex I subunit 2 family. In terms of assembly, core subunit of respiratory chain NADH dehydrogenase (Complex I) which is composed of 45 different subunits. Interacts with TMEM242.

It localises to the mitochondrion inner membrane. It carries out the reaction a ubiquinone + NADH + 5 H(+)(in) = a ubiquinol + NAD(+) + 4 H(+)(out). Its function is as follows. Core subunit of the mitochondrial membrane respiratory chain NADH dehydrogenase (Complex I) which catalyzes electron transfer from NADH through the respiratory chain, using ubiquinone as an electron acceptor. Essential for the catalytic activity and assembly of complex I. The sequence is that of NADH-ubiquinone oxidoreductase chain 2 from Syconycteris australis (Southern blossom bat).